Reading from the N-terminus, the 179-residue chain is Large ribosomal subunit protein uL5 (179 aa).

It belongs to the universal ribosomal protein uL5 family. Part of the 50S ribosomal subunit; part of the 5S rRNA/L5/L18/L25 subcomplex. Contacts the 5S rRNA and the P site tRNA. Forms a bridge to the 30S subunit in the 70S ribosome.

Its function is as follows. This is one of the proteins that bind and probably mediate the attachment of the 5S RNA into the large ribosomal subunit, where it forms part of the central protuberance. In the 70S ribosome it contacts protein S13 of the 30S subunit (bridge B1b), connecting the 2 subunits; this bridge is implicated in subunit movement. Contacts the P site tRNA; the 5S rRNA and some of its associated proteins might help stabilize positioning of ribosome-bound tRNAs. The protein is Large ribosomal subunit protein uL5 of Pseudomonas putida (strain W619).